Consider the following 336-residue polypeptide: RHOMBOID-like protein 12, mitochondrial (336 aa).

Residues Met-1–Asn-85 constitute a mitochondrion transit peptide. 6 consecutive transmembrane segments (helical) span residues Val-135–Gln-155, Ile-185–Ala-205, Leu-216–Ala-236, Pro-254–Pro-274, Ala-276–Ile-296, and Asn-307–Ala-327. Ser-259 functions as the Nucleophile in the catalytic mechanism. The Charge relay system role is filled by His-315.

It belongs to the peptidase S54 family.

The protein resides in the mitochondrion membrane. Its function is as follows. Probable rhomboid-type serine protease that catalyzes intramembrane proteolysis. Unable to cleave either of the yeast Pcp1 substrates in yeast cells. The sequence is that of RHOMBOID-like protein 12, mitochondrial from Arabidopsis thaliana (Mouse-ear cress).